Consider the following 471-residue polypeptide: tRNA-2-methylthio-N(6)-dimethylallyladenosine synthase (471 aa).

The MTTase N-terminal domain maps to 31–149 (LYYHIETYGC…FPQLLWEALN (119 aa)). The [4Fe-4S] cluster site is built by C40, C76, C110, C186, C190, and C193. Residues 172-402 (RDSNLKAWVN…IELQNKISLE (231 aa)) form the Radical SAM core domain. The TRAM domain occupies 405 to 468 (AELRGKIVEV…AWTMQGELVE (64 aa)).

It belongs to the methylthiotransferase family. MiaB subfamily. In terms of assembly, monomer. [4Fe-4S] cluster serves as cofactor.

The protein localises to the cytoplasm. It catalyses the reaction N(6)-dimethylallyladenosine(37) in tRNA + (sulfur carrier)-SH + AH2 + 2 S-adenosyl-L-methionine = 2-methylsulfanyl-N(6)-dimethylallyladenosine(37) in tRNA + (sulfur carrier)-H + 5'-deoxyadenosine + L-methionine + A + S-adenosyl-L-homocysteine + 2 H(+). Functionally, catalyzes the methylthiolation of N6-(dimethylallyl)adenosine (i(6)A), leading to the formation of 2-methylthio-N6-(dimethylallyl)adenosine (ms(2)i(6)A) at position 37 in tRNAs that read codons beginning with uridine. This chain is tRNA-2-methylthio-N(6)-dimethylallyladenosine synthase, found in Thermoanaerobacter sp. (strain X514).